The primary structure comprises 40 residues: Biotin carboxylase (40 aa).

The Biotin carboxylation domain maps to 1 to 40; that stretch reads ILVANRGEIAVRLLEEAPSPALTPELRITAYLPSGGPFVR. Positions 13–27 constitute an ATP-grasp domain; the sequence is LLEEAPSPALTPELR.

Acetyl-CoA carboxylase is a heterohexamer of biotin carboxyl carrier protein, biotin carboxylase and the two subunits of carboxyl transferase in a 2:2 complex. Requires Mg(2+) as cofactor. Mn(2+) is required as a cofactor.

It carries out the reaction N(6)-biotinyl-L-lysyl-[protein] + hydrogencarbonate + ATP = N(6)-carboxybiotinyl-L-lysyl-[protein] + ADP + phosphate + H(+). Its pathway is lipid metabolism; malonyl-CoA biosynthesis; malonyl-CoA from acetyl-CoA: step 1/1. In terms of biological role, this protein is a component of the acetyl coenzyme A carboxylase complex; first, biotin carboxylase catalyzes the carboxylation of the carrier protein and then the transcarboxylase transfers the carboxyl group to form malonyl-CoA. The protein is Biotin carboxylase of Populus euphratica (Euphrates poplar).